The following is a 468-amino-acid chain: Probable cytosol aminopeptidase (468 aa).

2 residues coordinate Mn(2+): K242 and D247. The active site involves K254. D265, D324, and E326 together coordinate Mn(2+). Residue R328 is part of the active site.

It belongs to the peptidase M17 family. Mn(2+) serves as cofactor.

It is found in the cytoplasm. It catalyses the reaction Release of an N-terminal amino acid, Xaa-|-Yaa-, in which Xaa is preferably Leu, but may be other amino acids including Pro although not Arg or Lys, and Yaa may be Pro. Amino acid amides and methyl esters are also readily hydrolyzed, but rates on arylamides are exceedingly low.. The enzyme catalyses Release of an N-terminal amino acid, preferentially leucine, but not glutamic or aspartic acids.. Its function is as follows. Presumably involved in the processing and regular turnover of intracellular proteins. Catalyzes the removal of unsubstituted N-terminal amino acids from various peptides. The polypeptide is Probable cytosol aminopeptidase (Neisseria meningitidis serogroup A / serotype 4A (strain DSM 15465 / Z2491)).